Here is a 564-residue protein sequence, read N- to C-terminus: Dihydroxy-acid dehydratase (564 aa).

Asp80 serves as a coordination point for Mg(2+). [2Fe-2S] cluster is bound at residue Cys121. Mg(2+) contacts are provided by Asp122 and Lys123. Lys123 is subject to N6-carboxylysine. Cys194 lines the [2Fe-2S] cluster pocket. Glu447 is a Mg(2+) binding site. Ser473 acts as the Proton acceptor in catalysis.

It belongs to the IlvD/Edd family. As to quaternary structure, homodimer. It depends on [2Fe-2S] cluster as a cofactor. The cofactor is Mg(2+).

The enzyme catalyses (2R)-2,3-dihydroxy-3-methylbutanoate = 3-methyl-2-oxobutanoate + H2O. The catalysed reaction is (2R,3R)-2,3-dihydroxy-3-methylpentanoate = (S)-3-methyl-2-oxopentanoate + H2O. The protein operates within amino-acid biosynthesis; L-isoleucine biosynthesis; L-isoleucine from 2-oxobutanoate: step 3/4. It functions in the pathway amino-acid biosynthesis; L-valine biosynthesis; L-valine from pyruvate: step 3/4. Functionally, functions in the biosynthesis of branched-chain amino acids. Catalyzes the dehydration of (2R,3R)-2,3-dihydroxy-3-methylpentanoate (2,3-dihydroxy-3-methylvalerate) into 2-oxo-3-methylpentanoate (2-oxo-3-methylvalerate) and of (2R)-2,3-dihydroxy-3-methylbutanoate (2,3-dihydroxyisovalerate) into 2-oxo-3-methylbutanoate (2-oxoisovalerate), the penultimate precursor to L-isoleucine and L-valine, respectively. This chain is Dihydroxy-acid dehydratase, found in Listeria welshimeri serovar 6b (strain ATCC 35897 / DSM 20650 / CCUG 15529 / CIP 8149 / NCTC 11857 / SLCC 5334 / V8).